A 189-amino-acid polypeptide reads, in one-letter code: Elongation factor P 2 (189 aa).

The protein belongs to the elongation factor P family.

It localises to the cytoplasm. Its pathway is protein biosynthesis; polypeptide chain elongation. Functionally, involved in peptide bond synthesis. Stimulates efficient translation and peptide-bond synthesis on native or reconstituted 70S ribosomes in vitro. Probably functions indirectly by altering the affinity of the ribosome for aminoacyl-tRNA, thus increasing their reactivity as acceptors for peptidyl transferase. This is Elongation factor P 2 from Lactobacillus acidophilus (strain ATCC 700396 / NCK56 / N2 / NCFM).